The chain runs to 369 residues: Chaperone protein DnaJ (369 aa).

One can recognise a J domain in the interval 4–69; it reads SYYEILEVEK…KKRALYDRYG (66 aa). The CR-type zinc-finger motif lies at 130–207; the sequence is GCKKTIKAQY…CKGKTYILKD (78 aa). The Zn(2+) site is built by Cys143, Cys146, Cys159, Cys162, Cys181, Cys184, Cys195, and Cys198. CXXCXGXG motif repeat units lie at residues 143–150, 159–166, 181–188, and 195–202; these read CESCDGTG, CKQCNGQG, CGACQGKG, and CQACKGKT.

It belongs to the DnaJ family. As to quaternary structure, homodimer. Zn(2+) is required as a cofactor.

The protein localises to the cytoplasm. Its function is as follows. Participates actively in the response to hyperosmotic and heat shock by preventing the aggregation of stress-denatured proteins and by disaggregating proteins, also in an autonomous, DnaK-independent fashion. Unfolded proteins bind initially to DnaJ; upon interaction with the DnaJ-bound protein, DnaK hydrolyzes its bound ATP, resulting in the formation of a stable complex. GrpE releases ADP from DnaK; ATP binding to DnaK triggers the release of the substrate protein, thus completing the reaction cycle. Several rounds of ATP-dependent interactions between DnaJ, DnaK and GrpE are required for fully efficient folding. Also involved, together with DnaK and GrpE, in the DNA replication of plasmids through activation of initiation proteins. This chain is Chaperone protein DnaJ, found in Helicobacter pylori (strain J99 / ATCC 700824) (Campylobacter pylori J99).